The primary structure comprises 358 residues: Heme A synthase (358 aa).

8 helical membrane passes run 25 to 45 (LVRY…MVGG), 111 to 131 (LLAR…WLTG), 141 to 161 (MLGL…MVAS), 176 to 196 (IHLT…RGLV), 210 to 230 (FAGW…LVAG), 269 to 289 (VQFV…LHAV), 304 to 324 (TIVL…TLLM), and 326 to 346 (APLH…AFAV). Residue His273 participates in heme binding. His334 contacts heme.

It belongs to the COX15/CtaA family. Type 2 subfamily. As to quaternary structure, interacts with CtaB. Requires heme b as cofactor.

The protein resides in the cell membrane. The enzyme catalyses Fe(II)-heme o + 2 A + H2O = Fe(II)-heme a + 2 AH2. It functions in the pathway porphyrin-containing compound metabolism; heme A biosynthesis; heme A from heme O: step 1/1. Catalyzes the conversion of heme O to heme A by two successive hydroxylations of the methyl group at C8. The first hydroxylation forms heme I, the second hydroxylation results in an unstable dihydroxymethyl group, which spontaneously dehydrates, resulting in the formyl group of heme A. The sequence is that of Heme A synthase from Brucella abortus (strain S19).